Here is a 428-residue protein sequence, read N- to C-terminus: Kynureninase (428 aa).

Pyridoxal 5'-phosphate contacts are provided by residues threonine 104, threonine 105, 132-135, aspartate 213, histidine 216, and tyrosine 238; that span reads FPSD. An N6-(pyridoxal phosphate)lysine modification is found at lysine 239. Positions 267 and 295 each coordinate pyridoxal 5'-phosphate.

Belongs to the kynureninase family. As to quaternary structure, homodimer. Pyridoxal 5'-phosphate is required as a cofactor.

The catalysed reaction is L-kynurenine + H2O = anthranilate + L-alanine + H(+). It carries out the reaction 3-hydroxy-L-kynurenine + H2O = 3-hydroxyanthranilate + L-alanine + H(+). It participates in amino-acid degradation; L-kynurenine degradation; L-alanine and anthranilate from L-kynurenine: step 1/1. Its pathway is cofactor biosynthesis; NAD(+) biosynthesis; quinolinate from L-kynurenine: step 2/3. Functionally, catalyzes the cleavage of L-kynurenine (L-Kyn) and L-3-hydroxykynurenine (L-3OHKyn) into anthranilic acid (AA) and 3-hydroxyanthranilic acid (3-OHAA), respectively. The chain is Kynureninase from Bacillus anthracis.